We begin with the raw amino-acid sequence, 240 residues long: DNA repair protein RecO (240 aa).

Belongs to the RecO family.

Functionally, involved in DNA repair and RecF pathway recombination. The polypeptide is DNA repair protein RecO (Wolbachia pipientis wMel).